The sequence spans 349 residues: Serine/threonine-protein kinase SRK2A (349 aa).

The Protein kinase domain occupies 12–268 (YELVKDIGSG…IQEIKNHEWF (257 aa)). ATP contacts are provided by residues 18 to 26 (IGSGNFGVA) and Lys41. Asp131 acts as the Proton acceptor in catalysis. The activation loop stretch occupies residues 151–177 (DFGYSKSSLLHSQPKSTVGTPAYIAPE).

This sequence belongs to the protein kinase superfamily. Ser/Thr protein kinase family.

It carries out the reaction L-seryl-[protein] + ATP = O-phospho-L-seryl-[protein] + ADP + H(+). The enzyme catalyses L-threonyl-[protein] + ATP = O-phospho-L-threonyl-[protein] + ADP + H(+). Its activity is regulated as follows. Activated by osmotic stress and by abscisic acid (ABA). Activation by NaCl is dependent on ABA. Functionally, involved in early responses to osmotic stress. In Physcomitrium patens (Spreading-leaved earth moss), this protein is Serine/threonine-protein kinase SRK2A.